Here is a 215-residue protein sequence, read N- to C-terminus: Translation initiation factor IF-3 (215 aa).

The disordered stretch occupies residues 159–215 (SAEVQQPPKREGRNMIMFLGPRKTPLQKDKPEQATKAERTLPIAKPPGKTAAPAAAN). The span at 184-197 (LQKDKPEQATKAER) shows a compositional bias: basic and acidic residues. Residues 200 to 215 (PIAKPPGKTAAPAAAN) are compositionally biased toward low complexity.

Belongs to the IF-3 family. As to quaternary structure, monomer.

Its subcellular location is the cytoplasm. Functionally, IF-3 binds to the 30S ribosomal subunit and shifts the equilibrium between 70S ribosomes and their 50S and 30S subunits in favor of the free subunits, thus enhancing the availability of 30S subunits on which protein synthesis initiation begins. The sequence is that of Translation initiation factor IF-3 from Synechococcus sp. (strain RCC307).